Reading from the N-terminus, the 131-residue chain is MSEIPGDLKFLKSHEWARVEGNGRVTVGISDHAQGLLGDLVYVELPEVGATAKANEQIAVVESVKAASDVYSPVSGTIVEVNSALSDKPETINEDAYGDGWMYVVELSNAEELNELLDPDAYAEALEDEDH.

One can recognise a Lipoyl-binding domain in the interval 24 to 106 (RVTVGISDHA…YGDGWMYVVE (83 aa)). At Lys65 the chain carries N6-lipoyllysine.

Belongs to the GcvH family. In terms of assembly, the glycine cleavage system is composed of four proteins: P, T, L and H. (R)-lipoate is required as a cofactor.

The glycine cleavage system catalyzes the degradation of glycine. The H protein shuttles the methylamine group of glycine from the P protein to the T protein. This chain is Glycine cleavage system H protein, found in Stenotrophomonas maltophilia (strain R551-3).